Consider the following 563-residue polypeptide: Arginine--tRNA ligase (563 aa).

The 'HIGH' region signature appears at 120 to 130 (PNIAKPFHVGH).

Belongs to the class-I aminoacyl-tRNA synthetase family. In terms of assembly, monomer.

It is found in the cytoplasm. It catalyses the reaction tRNA(Arg) + L-arginine + ATP = L-arginyl-tRNA(Arg) + AMP + diphosphate. The protein is Arginine--tRNA ligase of Clostridium botulinum (strain Alaska E43 / Type E3).